The primary structure comprises 448 residues: Adenylosuccinate synthetase (448 aa).

Residues 36–42 (GDEGKGK) and 64–66 (GHT) contribute to the GTP site. Asp37 serves as the catalytic Proton acceptor. Residues Asp37 and Gly64 each coordinate Mg(2+). IMP is bound by residues 37 to 40 (DEGK), 62 to 65 (NAGH), Thr154, Arg168, Asn246, Thr261, and Arg325. The active-site Proton donor is His65. 321–327 (VTTKRKR) contributes to the substrate binding site. GTP contacts are provided by residues Arg327, 353–355 (KLD), and 436–438 (GVG).

Belongs to the adenylosuccinate synthetase family. As to quaternary structure, homodimer. Requires Mg(2+) as cofactor.

It localises to the cytoplasm. It catalyses the reaction IMP + L-aspartate + GTP = N(6)-(1,2-dicarboxyethyl)-AMP + GDP + phosphate + 2 H(+). It functions in the pathway purine metabolism; AMP biosynthesis via de novo pathway; AMP from IMP: step 1/2. Its function is as follows. Plays an important role in the de novo pathway and in the salvage pathway of purine nucleotide biosynthesis. Catalyzes the first committed step in the biosynthesis of AMP from IMP. This is Adenylosuccinate synthetase from Drosophila pseudoobscura pseudoobscura (Fruit fly).